Reading from the N-terminus, the 415-residue chain is Histidine--tRNA ligase (415 aa).

The protein belongs to the class-II aminoacyl-tRNA synthetase family. As to quaternary structure, homodimer.

The protein resides in the cytoplasm. The enzyme catalyses tRNA(His) + L-histidine + ATP = L-histidyl-tRNA(His) + AMP + diphosphate + H(+). This is Histidine--tRNA ligase from Idiomarina loihiensis (strain ATCC BAA-735 / DSM 15497 / L2-TR).